A 90-amino-acid chain; its full sequence is Probable Fe(2+)-trafficking protein (90 aa).

It belongs to the Fe(2+)-trafficking protein family.

Functionally, could be a mediator in iron transactions between iron acquisition and iron-requiring processes, such as synthesis and/or repair of Fe-S clusters in biosynthetic enzymes. In Pseudomonas putida (strain W619), this protein is Probable Fe(2+)-trafficking protein.